A 270-amino-acid chain; its full sequence is Glutamate racemase (270 aa).

Substrate contacts are provided by residues D7–S8 and Y39–G40. The active-site Proton donor/acceptor is C70. N71–T72 is a binding site for substrate. C194 (proton donor/acceptor) is an active-site residue. T195–H196 is a binding site for substrate.

It belongs to the aspartate/glutamate racemases family.

The enzyme catalyses L-glutamate = D-glutamate. It participates in cell wall biogenesis; peptidoglycan biosynthesis. In terms of biological role, provides the (R)-glutamate required for cell wall biosynthesis. The sequence is that of Glutamate racemase from Cereibacter sphaeroides (strain ATCC 17025 / ATH 2.4.3) (Rhodobacter sphaeroides).